The chain runs to 382 residues: MPQRQPQPAHPADGIYFGLMSGTSMDGVDGVAVRFEAGRAPVVLAEAFVGFAQSLRDALFALQQPGDNEIDRESLAANALVTRYAVCCHELQRTAGLSRDEIRAIGVHGQTVRHRPERGYTRQLNNPALLAELTQVDVIADFRSRDVAAGGHGAPLAPAFHATVFGAPGETRVVCNLGGISNITILPGAGGDVRGFDCGPANALIDAWATRHLGKPYDDGGKFAARGTVHAALLAALLDEPYFTAPPPKSTGRDLFNPAWLDAKLAAFSQVAPEDVQATLTALTAVSVAREVAQHAPGCKAVFVCGGGARNPVLLDALRHALREAGVPATVDTTAALGVPPQQVEALAFAWLAYRFTARQPGNLATVTGAAGNRVLGALYPR.

Position 22–29 (22–29 (GTSMDGVD)) interacts with ATP.

Belongs to the anhydro-N-acetylmuramic acid kinase family.

The enzyme catalyses 1,6-anhydro-N-acetyl-beta-muramate + ATP + H2O = N-acetyl-D-muramate 6-phosphate + ADP + H(+). The protein operates within amino-sugar metabolism; 1,6-anhydro-N-acetylmuramate degradation. Its pathway is cell wall biogenesis; peptidoglycan recycling. In terms of biological role, catalyzes the specific phosphorylation of 1,6-anhydro-N-acetylmuramic acid (anhMurNAc) with the simultaneous cleavage of the 1,6-anhydro ring, generating MurNAc-6-P. Is required for the utilization of anhMurNAc either imported from the medium or derived from its own cell wall murein, and thus plays a role in cell wall recycling. This chain is Anhydro-N-acetylmuramic acid kinase, found in Burkholderia cenocepacia (strain ATCC BAA-245 / DSM 16553 / LMG 16656 / NCTC 13227 / J2315 / CF5610) (Burkholderia cepacia (strain J2315)).